Reading from the N-terminus, the 317-residue chain is DNA-directed RNA polymerase subunit alpha 2 (317 aa).

Residues 1-227 (MALENLLHPT…NQLRNIVDIE (227 aa)) are alpha N-terminal domain (alpha-NTD). The tract at residues 241 to 317 (INPILLKHVE…TLIENWPQDL (77 aa)) is alpha C-terminal domain (alpha-CTD).

Belongs to the RNA polymerase alpha chain family. Homodimer. The RNAP catalytic core consists of 2 alpha, 1 beta, 1 beta' and 1 omega subunit. When a sigma factor is associated with the core the holoenzyme is formed, which can initiate transcription.

The enzyme catalyses RNA(n) + a ribonucleoside 5'-triphosphate = RNA(n+1) + diphosphate. Functionally, DNA-dependent RNA polymerase catalyzes the transcription of DNA into RNA using the four ribonucleoside triphosphates as substrates. This Francisella tularensis subsp. holarctica (strain LVS) protein is DNA-directed RNA polymerase subunit alpha 2.